The sequence spans 540 residues: Chaperonin GroEL (540 aa).

Residues 29-32 (TLGP), 86-90 (DGTTT), Gly-413, 477-479 (DAL), and Asp-493 each bind ATP.

This sequence belongs to the chaperonin (HSP60) family. As to quaternary structure, forms a cylinder of 14 subunits composed of two heptameric rings stacked back-to-back. Interacts with the co-chaperonin GroES.

The protein localises to the cytoplasm. The enzyme catalyses ATP + H2O + a folded polypeptide = ADP + phosphate + an unfolded polypeptide.. Its function is as follows. Together with its co-chaperonin GroES, plays an essential role in assisting protein folding. The GroEL-GroES system forms a nano-cage that allows encapsulation of the non-native substrate proteins and provides a physical environment optimized to promote and accelerate protein folding. This Clostridium botulinum (strain Alaska E43 / Type E3) protein is Chaperonin GroEL.